Consider the following 191-residue polypeptide: 3-isopropylmalate dehydratase small subunit (191 aa).

Belongs to the LeuD family. LeuD type 1 subfamily. Heterodimer of LeuC and LeuD.

It catalyses the reaction (2R,3S)-3-isopropylmalate = (2S)-2-isopropylmalate. It functions in the pathway amino-acid biosynthesis; L-leucine biosynthesis; L-leucine from 3-methyl-2-oxobutanoate: step 2/4. Functionally, catalyzes the isomerization between 2-isopropylmalate and 3-isopropylmalate, via the formation of 2-isopropylmaleate. This Lactococcus lactis subsp. cremoris (strain MG1363) protein is 3-isopropylmalate dehydratase small subunit.